We begin with the raw amino-acid sequence, 236 residues long: uncharacterized protein (236 aa).

It belongs to the RHS family.

This is an uncharacterized protein from Escherichia coli (strain K12).